Here is a 440-residue protein sequence, read N- to C-terminus: Glucose-1-phosphate adenylyltransferase (440 aa).

Alpha-D-glucose 1-phosphate contacts are provided by residues Tyr125, Gly190, 205 to 206 (EK), and Ser223.

The protein belongs to the bacterial/plant glucose-1-phosphate adenylyltransferase family. In terms of assembly, homotetramer.

The enzyme catalyses alpha-D-glucose 1-phosphate + ATP + H(+) = ADP-alpha-D-glucose + diphosphate. The protein operates within glycan biosynthesis; glycogen biosynthesis. In terms of biological role, involved in the biosynthesis of ADP-glucose, a building block required for the elongation reactions to produce glycogen. Catalyzes the reaction between ATP and alpha-D-glucose 1-phosphate (G1P) to produce pyrophosphate and ADP-Glc. This chain is Glucose-1-phosphate adenylyltransferase, found in Dechloromonas aromatica (strain RCB).